Consider the following 366-residue polypeptide: Palmitoyltransferase ZDHHC2 (366 aa).

The Cytoplasmic portion of the chain corresponds to 1–15 (MAPSGPGGVRRRCRR). The helical transmembrane segment at 16–36 (VLYWIPVVFISLLLGWSYYAY) threads the bilayer. Over 37–47 (AIQLCIVSMEN) the chain is Lumenal. Residues 48 to 68 (IGEQVVCLMAYHLLFAMFVWS) traverse the membrane as a helical segment. Topologically, residues 69 to 169 (YWKTIFTLPM…NNCVGFSNYK (101 aa)) are cytoplasmic. In terms of domain architecture, DHHC spans 126–176 (RYCDRCRLIKPDRCHHCSVCDKCILKMDHHCPWVNNCVGFSNYKFFLLFLA). Cys156 functions as the S-palmitoyl cysteine intermediate in the catalytic mechanism. A helical membrane pass occupies residues 170–190 (FFLLFLAYSLLYCLFIAATDL). Residues 191 to 207 (QYFIRFWTNGLPDTQAK) lie on the Lumenal side of the membrane. A helical transmembrane segment spans residues 208 to 228 (FHIMFLFFAAAMFSVSLSSLF). At 229 to 366 (GYHCWLVSKN…NPALTMENET (138 aa)) the chain is on the cytoplasmic side. Composition is skewed to polar residues over residues 297–316 (VNQD…TAKN) and 332–349 (SHLL…SNSG). The segment at 297–366 (VNQDPEQPST…NPALTMENET (70 aa)) is disordered. The interval 298 to 366 (NQDPEQPSTP…NPALTMENET (69 aa)) is mediates localization to plasma membrane and recycling endosomes. Positions 334 to 335 (LL) match the Non-canonical dileucine endocytic signal motif. The NPxY-like endocytic signal signature appears at 357-360 (NPAL).

It belongs to the DHHC palmitoyltransferase family. Monomer. Homodimer. The monomeric form has a higher catalytic activity. Post-translationally, autopalmitoylated.

Its subcellular location is the postsynaptic density. The protein localises to the postsynaptic recycling endosome membrane. The protein resides in the cell membrane. It localises to the endoplasmic reticulum membrane. It is found in the golgi apparatus membrane. It catalyses the reaction L-cysteinyl-[protein] + hexadecanoyl-CoA = S-hexadecanoyl-L-cysteinyl-[protein] + CoA. The catalysed reaction is L-cysteinyl-[protein] + tetradecanoyl-CoA = S-tetradecanoyl-L-cysteinyl-[protein] + CoA. It carries out the reaction L-cysteinyl-[protein] + octadecanoyl-CoA = S-octadecanoyl-L-cysteinyl-[protein] + CoA. In terms of biological role, palmitoyltransferase that catalyzes the addition of palmitate onto various protein substrates and is involved in a variety of cellular processes. Has no stringent fatty acid selectivity and in addition to palmitate can also transfer onto target proteins myristate from tetradecanoyl-CoA and stearate from octadecanoyl-CoA. In the nervous system, plays a role in long term synaptic potentiation by palmitoylating AKAP5 through which it regulates protein trafficking from the dendritic recycling endosomes to the plasma membrane and controls both structural and functional plasticity at excitatory synapses. In dendrites, mediates the palmitoylation of DLG4 when synaptic activity decreases and induces synaptic clustering of DLG4 and associated AMPA-type glutamate receptors. Also mediates the de novo and turnover palmitoylation of RGS7BP, a shuttle for Gi/o-specific GTPase-activating proteins/GAPs, promoting its localization to the plasma membrane in response to the activation of G protein-coupled receptors. Through the localization of these GTPase-activating proteins/GAPs, it also probably plays a role in G protein-coupled receptors signaling in neurons. Also probably plays a role in cell adhesion by palmitoylating CD9 and CD151 to regulate their expression and function. Palmitoylates the endoplasmic reticulum protein CKAP4 and regulates its localization to the plasma membrane. Could also palmitoylate LCK and regulate its localization to the plasma membrane. The polypeptide is Palmitoyltransferase ZDHHC2 (Rattus norvegicus (Rat)).